The primary structure comprises 1108 residues: Lon protease homolog, mitochondrial (1108 aa).

The N-terminal 62 residues, 1-62 (MLRGQSLPWR…RAFSTSSIRR (62 aa)), are a transit peptide targeting the mitochondrion. Disordered stretches follow at residues 24 to 192 (PLLP…QKPS) and 299 to 318 (LPPGEQSKAGNTEDKAPEKK). A compositionally biased stretch (low complexity) spans 36-53 (RSNLSISRLSRSPSLSPR). 2 stretches are compositionally biased toward basic and acidic residues: residues 78–103 (EQKDPNEQKDSDRSPEGRRRSPDSTG) and 119–146 (KVAGEKEQRGVEEDAKKENVSIEGKSDP). Over residues 161–171 (SDTKSSASNGG) the composition is skewed to polar residues. Composition is skewed to basic and acidic residues over residues 174–188 (DGGRKGKKGSGDRAL) and 309–318 (NTEDKAPEKK). The Lon N-terminal domain maps to 200–452 (VMAIPIAKRP…KALVVLKKEL (253 aa)). 605–612 (GPPGVGKT) contributes to the ATP binding site. Positions 821 to 855 (DKALTDEGKAAQEESKKETEEGDPKDPPADPEKST) are enriched in basic and acidic residues. The disordered stretch occupies residues 821–862 (DKALTDEGKAAQEESKKETEEGDPKDPPADPEKSTTETPRLA). One can recognise a Lon proteolytic domain in the interval 895-1081 (TFPPGVTMGL…SEVFNILFAE (187 aa)). Residues Ser-987 and Lys-1030 contribute to the active site.

The protein belongs to the peptidase S16 family. In terms of assembly, homohexamer or homoheptamer. Organized in a ring with a central cavity.

Its subcellular location is the mitochondrion matrix. The enzyme catalyses Hydrolysis of proteins in presence of ATP.. In terms of biological role, ATP-dependent serine protease that mediates the selective degradation of misfolded, unassembled or oxidatively damaged polypeptides as well as certain short-lived regulatory proteins in the mitochondrial matrix. May also have a chaperone function in the assembly of inner membrane protein complexes. Participates in the regulation of mitochondrial gene expression and in the maintenance of the integrity of the mitochondrial genome. Binds to mitochondrial DNA in a site-specific manner. The polypeptide is Lon protease homolog, mitochondrial (pim1) (Aspergillus fumigatus (strain ATCC MYA-4609 / CBS 101355 / FGSC A1100 / Af293) (Neosartorya fumigata)).